The following is a 657-amino-acid chain: Protein FAM200B (657 aa).

This sequence belongs to the FAM200 family.

In Homo sapiens (Human), this protein is Protein FAM200B.